The sequence spans 96 residues: Cytoplasmic envelopment protein 3 (96 aa).

The N-myristoyl glycine; by host moiety is linked to residue Gly-2. Residues Asp-37–Glu-43 are asp/Glu-rich (acidic). Ser-40 bears the Phosphoserine mark. The tract at residues Pro-50 to Glu-96 is disordered. Basic and acidic residues predominate over residues Arg-65–Val-81.

This sequence belongs to the herpesviridae cytoplasmic envelopment protein 3 family. Interacts with cytoplasmic envelopment protein 2; this interaction is essential for the proper localization of each protein to the assembly complex and thus for the production of infectious virus. Interacts with gE (via C-terminus). Interacts with gD (via C-terminus). Interacts with UL56. Myristoylation and palmitoylation (probably on one or more of the nearby cysteines at the N-terminus) enable membrane-binding and Golgi apparatus-specific targeting and are essential for efficient packaging. Post-translationally, phosphorylated. Phosphorylation does not seem to be required for recycling to the host Golgi apparatus. Packaging is selective for underphosphorylated forms.

The protein resides in the virion tegument. Its subcellular location is the virion membrane. The protein localises to the host cell membrane. It localises to the host Golgi apparatus membrane. Functionally, plays an important role in the cytoplasmic envelopment of tegument proteins and capsids during the assembly and egress processes. Also participates in viral entry at the fusion step probably by regulating the core fusion machinery. In Homo sapiens (Human), this protein is Cytoplasmic envelopment protein 3.